The chain runs to 363 residues: Spermidine/putrescine import ATP-binding protein PotA (363 aa).

The ABC transporter domain maps to 6–236 (LEIRNVTRRF…PRSRFVADFI (231 aa)). An ATP-binding site is contributed by 38 to 45 (GPSGCGKT).

It belongs to the ABC transporter superfamily. Spermidine/putrescine importer (TC 3.A.1.11.1) family. In terms of assembly, the complex is composed of two ATP-binding proteins (PotA), two transmembrane proteins (PotB and PotC) and a solute-binding protein (PotD).

The protein resides in the cell inner membrane. It carries out the reaction ATP + H2O + polyamine-[polyamine-binding protein]Side 1 = ADP + phosphate + polyamineSide 2 + [polyamine-binding protein]Side 1.. Its function is as follows. Part of the ABC transporter complex PotABCD involved in spermidine/putrescine import. Responsible for energy coupling to the transport system. In Pseudomonas aeruginosa (strain UCBPP-PA14), this protein is Spermidine/putrescine import ATP-binding protein PotA.